The chain runs to 309 residues: Porphobilinogen deaminase (309 aa).

Residue C241 is modified to S-(dipyrrolylmethanemethyl)cysteine.

It belongs to the HMBS family. As to quaternary structure, monomer. Dipyrromethane is required as a cofactor.

It catalyses the reaction 4 porphobilinogen + H2O = hydroxymethylbilane + 4 NH4(+). It functions in the pathway porphyrin-containing compound metabolism; protoporphyrin-IX biosynthesis; coproporphyrinogen-III from 5-aminolevulinate: step 2/4. In terms of biological role, tetrapolymerization of the monopyrrole PBG into the hydroxymethylbilane pre-uroporphyrinogen in several discrete steps. The polypeptide is Porphobilinogen deaminase (Desulforamulus reducens (strain ATCC BAA-1160 / DSM 100696 / MI-1) (Desulfotomaculum reducens)).